The following is a 766-amino-acid chain: Serine/threonine-protein kinase DCLK2 (766 aa).

The interval 1–45 (MASTRSIELEHFEERDKRPRPGSRRGAPSSSGGSSSSGPKGNGLI) is disordered. Over residues 7 to 19 (IELEHFEERDKRP) the composition is skewed to basic and acidic residues. The span at 24–39 (RRGAPSSSGGSSSSGP) shows a compositional bias: low complexity. Position 61 is a phosphothreonine (Thr61). 2 consecutive Doublecortin domains span residues 72 to 158 (KKAR…VDYT) and 197 to 280 (KLVT…AQDD). 2 stretches are compositionally biased toward low complexity: residues 300–312 (AVKY…PGPS) and 324–347 (TPSS…SPGS). Residues 300–378 (AVKYSGSKSP…ELDRCISPEG (79 aa)) form a disordered region. Ser362 carries the post-translational modification Phosphoserine. Residues 394-651 (YKIGKVIGDG…AGQILSHPWV (258 aa)) enclose the Protein kinase domain. Residues 400 to 408 (IGDGNFAVV) and Lys423 each bind ATP. The active-site Proton acceptor is the Asp515. Ser647 is subject to Phosphoserine. Thr666 carries the post-translational modification Phosphothreonine. The interval 707-766 (CQDSGRPGMEPISPVPPSVEEIPVPGEAVPAPTPPESPTPHPPPAAPGGERAGTWRRHRD) is disordered. Residues 724–736 (SVEEIPVPGEAVP) are compositionally biased toward low complexity. The span at 737 to 752 (APTPPESPTPHPPPAA) shows a compositional bias: pro residues.

This sequence belongs to the protein kinase superfamily. CAMK Ser/Thr protein kinase family. CaMK subfamily. Binds to and stabilizes microtubules. Interacts with MAPK8IP1/JIP-1, MAPK8IP2/JIP-2, MAPK9/JNK2, PPP1R9B/NEURABIN-2 and actin. In terms of processing, autophosphorylated. As to expression, expressed in the brain, heart and eyes.

Its subcellular location is the cytoplasm. It localises to the cytoskeleton. The enzyme catalyses L-seryl-[protein] + ATP = O-phospho-L-seryl-[protein] + ADP + H(+). The catalysed reaction is L-threonyl-[protein] + ATP = O-phospho-L-threonyl-[protein] + ADP + H(+). In terms of biological role, protein kinase with a significantly reduced C(a2+)/CAM affinity and dependence compared to other members of the CaMK family. May play a role in the down-regulation of CRE-dependent gene activation probably by phosphorylation of the CREB coactivator CRTC2/TORC2 and the resulting retention of TORC2 in the cytoplasm. This chain is Serine/threonine-protein kinase DCLK2 (DCLK2), found in Homo sapiens (Human).